The primary structure comprises 440 residues: MNKFRTFPQINTLIEDESLKSYPFYIKVFFCKKVVAKLKENFSQDEISKDKLLLEIKKEIKTFYRKDLQSVINASGVVIHTNLGRSVIHEELYEACKDIICNYSNVEFDLENGKRGSRYALVLEKLKMLFECEDALVVNNNAAAVFLVLNSLCYDKEVISSRGELVEIGGSFRVPEVIKAAGVKLCEVGTSNKTHLKDYEQAIGENTALILKTHKSNFALMGFHSEVNIKDLHELAKEKGLLSYYDLGSGWCENLNEKLIKNEPKIKKLVQECDILSFSGDKLFGSAQAGIILGKKELIEKLKQNQLLRMLRVDKLTLSFLNESLKAYLQKDYKKIITLKLLNDDLSFIEKKALRVQKELNFQTQLKKSKSLVGGGSMPDKSLDTYILTFQGDALKLQTRFRKENIIGRIENDEFVLDFRTIRENELQKLILTINQMENL.

Lysine 282 carries the N6-(pyridoxal phosphate)lysine modification.

Belongs to the SelA family. Requires pyridoxal 5'-phosphate as cofactor.

It localises to the cytoplasm. It carries out the reaction L-seryl-tRNA(Sec) + selenophosphate + H(+) = L-selenocysteinyl-tRNA(Sec) + phosphate. It participates in aminoacyl-tRNA biosynthesis; selenocysteinyl-tRNA(Sec) biosynthesis; selenocysteinyl-tRNA(Sec) from L-seryl-tRNA(Sec) (bacterial route): step 1/1. In terms of biological role, converts seryl-tRNA(Sec) to selenocysteinyl-tRNA(Sec) required for selenoprotein biosynthesis. In Campylobacter jejuni (strain RM1221), this protein is L-seryl-tRNA(Sec) selenium transferase.